Reading from the N-terminus, the 243-residue chain is rRNA adenine N-6-methyltransferase (243 aa).

6 residues coordinate S-adenosyl-L-methionine: Asn-11, Ile-13, Gly-38, Glu-59, Asp-84, and Asn-101.

This sequence belongs to the class I-like SAM-binding methyltransferase superfamily. rRNA adenine N(6)-methyltransferase family.

It carries out the reaction adenosine(2085) in 23S rRNA + 2 S-adenosyl-L-methionine = N(6)-dimethyladenosine(2085) in 23S rRNA + 2 S-adenosyl-L-homocysteine + 2 H(+). In terms of biological role, this protein produces a dimethylation of the adenine residue at position 2085 in 23S rRNA, resulting in reduced affinity between ribosomes and macrolide-lincosamide-streptogramin B antibiotics. This is rRNA adenine N-6-methyltransferase (ermA1) from Staphylococcus aureus (strain Mu50 / ATCC 700699).